Consider the following 473-residue polypeptide: Phosphoglucosamine mutase (473 aa).

Residue Ser-102 is the Phosphoserine intermediate of the active site. Residues Ser-102, Asp-248, Asp-250, and Asp-252 each coordinate Mg(2+). Phosphoserine is present on Ser-102.

It belongs to the phosphohexose mutase family. Mg(2+) is required as a cofactor. Post-translationally, activated by phosphorylation.

The enzyme catalyses alpha-D-glucosamine 1-phosphate = D-glucosamine 6-phosphate. Functionally, catalyzes the conversion of glucosamine-6-phosphate to glucosamine-1-phosphate. The protein is Phosphoglucosamine mutase of Rhodospirillum centenum (strain ATCC 51521 / SW).